The chain runs to 515 residues: MSLGFVLAVTFSIFLGILTYYLWIWTYWMRKGVKGPRGRPFVGVLDVLLEHETPGLIKLGEWTKKYGKVYGYTDGTQRTLVVADPAMVHEIFVKQFDNFYGRKLNPIQGNPEKEQRVHLLAAQGYRWKRLRTISSQSFSNASLKKMKRTVEDSALELLRHIEKQTAGGEQIDMLRFYQEYTMDVIGRFAMGQTDSMMFKNPIVNVVREIFCGSRKNLMLICQVFPPIGQFIRDLTFKFPRIPAFKLYSIMQDVVAARIAQREREKGAESGEPQDFIDLFLDARSDDVDFSAEAREDFSKRNLKITKELSADEVVGQCFLFLIGGFDTTALSLSYVTYLLAVNPKIQEKVIEEIAREFGTSEVEFEKLGRLKYMDCVIKEALRLYPLASISNSRKCMKTTTVNGVKIEAGVYVQMDTWSLHYDPELWGEDVKEFKPERWSTDEPLEHKGAYLPFGLGPRQCIGMRLAIMEQKILLTHLLKNYTFETGNKTRIPLKLVGSATTSPEDVFVHLRPRIW.

C460 serves as a coordination point for heme.

The protein belongs to the cytochrome P450 family. Requires heme as cofactor.

Functionally, cytochromes P450 are a group of heme-thiolate monooxygenases. They oxidize a variety of structurally unrelated compounds, including steroids, fatty acids, and xenobiotics. This chain is Putative cytochrome P450 CYP13A2 (cyp-13A2), found in Caenorhabditis elegans.